A 401-amino-acid polypeptide reads, in one-letter code: MDVDSASLSPSSRLSVVCSASAEFSSSSSDSSNFSEGSPPESRRNSVNESVIKDEHYWERRRRNNDASRRSREKRRQNDLAMEEKIMLLSAENERLKSQLGTTPIPQPSVTEPPTSLIIPQVAKNLFPAGPIASLQASSMLTVPLLQAASHIPSMLQLCQLQPTTIQSPVYASTQQPASTSASSLFSSSSSSAFHPFRPSESAQQSFPSSSVIVKIERRSPDSSTDVNMPQPQLQPGSSVIQQIGQPAPSGTPQPVIQAVQQGPSLLSALLSQRRPSPTVPQSRTEHISGLNSPPRHTGNKSDCESVSSSASFSPSHSSEDHSNYSNKSPQYVDRRRRNNEAAKRCRANRRAVFEYRSRRVQLLEGENEDLRTQIETLKAEIAHFKSVLAQRASVVTALHP.

A compositionally biased stretch (low complexity) spans 19–38 (SASAEFSSSSSDSSNFSEGS). The disordered stretch occupies residues 19 to 78 (SASAEFSSSSSDSSNFSEGSPPESRRNSVNESVIKDEHYWERRRRNNDASRRSREKRRQN). Positions 41-78 (ESRRNSVNESVIKDEHYWERRRRNNDASRRSREKRRQN) are enriched in basic and acidic residues. Residues 54–100 (DEHYWERRRRNNDASRRSREKRRQNDLAMEEKIMLLSAENERLKSQL) enclose the bZIP 1 domain. Residues 60–85 (RRRRNNDASRRSREKRRQNDLAMEEK) form a basic motif 1 region. The tract at residues 89–96 (LSAENERL) is leucine-zipper 1. Residues 181–211 (SASSLFSSSSSSAFHPFRPSESAQQSFPSSS) show a composition bias toward low complexity. Disordered stretches follow at residues 181 to 256 (SASS…PQPV) and 273 to 345 (QRRP…AAKR). Composition is skewed to polar residues over residues 222–256 (DSST…PQPV) and 273–283 (QRRPSPTVPQS). Over residues 305–317 (ESVSSSASFSPSH) the composition is skewed to low complexity. A bZIP 2 domain is found at 329–392 (SPQYVDRRRR…AHFKSVLAQR (64 aa)). Residues 335 to 360 (RRRRNNEAAKRCRANRRAVFEYRSRR) form a basic motif 2 region. Residues 361 to 388 (VQLLEGENEDLRTQIETLKAEIAHFKSV) adopt a coiled-coil conformation. Residues 364–378 (LEGENEDLRTQIETL) form a leucine-zipper 2 region.

The protein belongs to the bZIP family. As to quaternary structure, interacts with cell death specification protein ces-2. Post-translationally, phosphorylated by mitogen-activated protein kinases pmk-2 and pmk-3. May be responsive to osmotic stress.

It localises to the nucleus. Functionally, acts as a transcription factor that recognizes and binds to the sequence 5'-[GA]TTA[CT]GTAA[CT]-3', a sequence present in many promoters. Involved in the development of the excretory duct cell, by positively modulating embryonic transcription of putative transcription factor lin-48, acting in concert with cell death specification protein ces-2. Negatively modulates expression of key autophagy-related genes, bec-1/ATG6 and lgg-1/ATG8, and may link together autophagy and apoptosis during development. Positively modulates expression of neuropeptide pigment dispersing factor homologs pdf-1 and pdf-2. This Caenorhabditis elegans protein is Transcription factor atf-2.